Consider the following 107-residue polypeptide: MDQFAHISAHDAHQKLAAGAARLVDIRDPQSFETAHAVGAFHLTNGTLVRFMNEVDFDTPVIVMCYHGNSSQGAAQYLLQQGYDEVYSLDGGFEAWRREFPIQAGDA.

The Rhodanese domain maps to 17–101 (AAGAARLVDI…GFEAWRREFP (85 aa)). Cys65 serves as the catalytic Cysteine persulfide intermediate.

Belongs to the GlpE family.

It is found in the cytoplasm. The enzyme catalyses thiosulfate + hydrogen cyanide = thiocyanate + sulfite + 2 H(+). It carries out the reaction thiosulfate + [thioredoxin]-dithiol = [thioredoxin]-disulfide + hydrogen sulfide + sulfite + 2 H(+). Functionally, transferase that catalyzes the transfer of sulfur from thiosulfate to thiophilic acceptors such as cyanide or dithiols. May function in a CysM-independent thiosulfate assimilation pathway by catalyzing the conversion of thiosulfate to sulfite, which can then be used for L-cysteine biosynthesis. The polypeptide is Thiosulfate sulfurtransferase GlpE (Aeromonas hydrophila subsp. hydrophila (strain ATCC 7966 / DSM 30187 / BCRC 13018 / CCUG 14551 / JCM 1027 / KCTC 2358 / NCIMB 9240 / NCTC 8049)).